A 310-amino-acid chain; its full sequence is Methionyl-tRNA formyltransferase (310 aa).

A (6S)-5,6,7,8-tetrahydrofolate-binding site is contributed by 112–115 (SLLP).

It belongs to the Fmt family.

It catalyses the reaction L-methionyl-tRNA(fMet) + (6R)-10-formyltetrahydrofolate = N-formyl-L-methionyl-tRNA(fMet) + (6S)-5,6,7,8-tetrahydrofolate + H(+). In terms of biological role, attaches a formyl group to the free amino group of methionyl-tRNA(fMet). The formyl group appears to play a dual role in the initiator identity of N-formylmethionyl-tRNA by promoting its recognition by IF2 and preventing the misappropriation of this tRNA by the elongation apparatus. The sequence is that of Methionyl-tRNA formyltransferase from Pelagibacter ubique (strain HTCC1062).